The chain runs to 91 residues: UPF0213 protein NGO_1598 (91 aa).

The 80-residue stretch at Ser4–Gln83 folds into the GIY-YIG domain.

Belongs to the UPF0213 family.

In Neisseria gonorrhoeae (strain ATCC 700825 / FA 1090), this protein is UPF0213 protein NGO_1598.